An 85-amino-acid chain; its full sequence is Large ribosomal subunit protein bL27 (85 aa).

It belongs to the bacterial ribosomal protein bL27 family.

This Solibacter usitatus (strain Ellin6076) protein is Large ribosomal subunit protein bL27.